The chain runs to 1136 residues: Phytochrome (1136 aa).

The disordered stretch occupies residues 1 to 28 (MSTTRPRAATHSASSGSVSRSSKHSARV). Residues 11–20 (HSASSGSVSR) are compositionally biased toward low complexity. The region spanning 231–414 (DIRLLCDTVV…VFGIQLNKEV (184 aa)) is the GAF domain. Cys336 is a phytochromobilin binding site. PAS domains are found at residues 629-699 (VTNE…LQGE) and 762-833 (DYRA…TKLR). The region spanning 913 to 1132 (YIRQEIRNPL…IINVEFPLAQ (220 aa)) is the Histidine kinase domain.

It belongs to the phytochrome family. As to quaternary structure, homodimer. Contains one covalently linked phytochromobilin chromophore.

Regulatory photoreceptor which exists in two forms that are reversibly interconvertible by light: the Pr form that absorbs maximally in the red region of the spectrum and the Pfr form that absorbs maximally in the far-red region. Photoconversion of Pr to Pfr induces an array of morphogenic responses, whereas reconversion of Pfr to Pr cancels the induction of those responses. Pfr controls the expression of a number of nuclear genes including those encoding the small subunit of ribulose-bisphosphate carboxylase, chlorophyll A/B binding protein, protochlorophyllide reductase, rRNA, etc. It also controls the expression of its own gene(s) in a negative feedback fashion. The polypeptide is Phytochrome (Picea abies (Norway spruce)).